Reading from the N-terminus, the 1254-residue chain is SUN domain-containing ossification factor (1254 aa).

An N-terminal signal peptide occupies residues 1-29 (MKKHRRALALVSCLFLCSLVWLPSWRVCC). 3 disordered regions span residues 58 to 88 (KKDE…HKLK), 118 to 270 (EESS…DIPT), and 282 to 304 (EKEK…KKVQ). Residues 130–145 (VENISSSSTSEITPIS) are compositionally biased toward low complexity. Over residues 165–175 (EQSETDCDVGE) the composition is skewed to acidic residues. Asparagine 202 and asparagine 236 each carry an N-linked (GlcNAc...) asparagine glycan. Basic and acidic residues predominate over residues 241-253 (LKNESSDYTKPGD). The region spanning 284–453 (EKSQSMHASS…SLIRVFGTSM (170 aa)) is the SUN domain. Over residues 288-297 (SMHASSNGGS) the composition is skewed to polar residues. An N-linked (GlcNAc...) asparagine glycan is attached at asparagine 524. 3 disordered regions span residues 530 to 553 (NATA…PSPE), 583 to 605 (EEEE…EDES), and 759 to 788 (HIPS…SSIE). Over residues 540 to 553 (PESTPVSTPVPSPE) the composition is skewed to low complexity. Positions 909–1009 (NQKESVFMRL…VAELKREVSD (101 aa)) form a coiled coil. N-linked (GlcNAc...) asparagine glycosylation is found at asparagine 928 and asparagine 955. A helical transmembrane segment spans residues 1011-1031 (QSYLVISLVLCVVLGLMLCMQ). The residue at position 1081 (serine 1081) is a Phosphoserine. Positions 1152–1172 (EVYHSSYKGPPSEGSSETSSQ) are disordered. Positions 1163-1172 (SEGSSETSSQ) are enriched in low complexity.

In terms of processing, O-glycosylated. O-mannosylated by POMT1 and POMT2 and elongated by POMGNT1. Post-translationally, N-glycosylated. Highly expressed in pancreas and testis and to a lower extent in prostate, ovary, heart, thymus, small intestine and spleen.

Its subcellular location is the rough endoplasmic reticulum membrane. Functionally, required for bone modeling during late embryogenesis. Regulates type I collagen synthesis in osteoblasts during their postnatal maturation. The protein is SUN domain-containing ossification factor (SUCO) of Homo sapiens (Human).